The primary structure comprises 389 residues: Oxytocin receptor (389 aa).

The interval 1 to 27 (MEGELAANWSTEAVNSSAAPPGAEGNC) is disordered. Residues 1–38 (MEGELAANWSTEAVNSSAAPPGAEGNCTAGPPRRNEAL) are Extracellular-facing. N-linked (GlcNAc...) asparagine glycans are attached at residues Asn-8, Asn-15, and Asn-26. Positions 8–18 (NWSTEAVNSSA) are enriched in polar residues. The helical transmembrane segment at 39-63 (ARVEVAVLCLILFLALSGNACVLLA) threads the bilayer. Topologically, residues 64-74 (LRTTRHKHSRL) are cytoplasmic. Residues 75-97 (FFFMKHLSIADLVVAVFQVLPQL) traverse the membrane as a helical segment. Residues 98–113 (LWDITFRFYGPDLLCR) are Extracellular-facing. A disulfide bond links Cys-112 and Cys-187. Residues 114–135 (LVKYLQVVGMFASTYLLLLMSL) form a helical membrane-spanning segment. The Cytoplasmic segment spans residues 136–154 (DRCLAICQPLRSLRRRTDR). Residues 155-175 (LAVLATWLGCLVASAPQVHIF) form a helical membrane-spanning segment. Residues 176–202 (SLREVADGVFDCWAVFIQPWGPKAYIT) lie on the Extracellular side of the membrane. Residues 203–225 (WITLAVYIVPVIVLAACYGLISF) form a helical membrane-spanning segment. The Cytoplasmic portion of the chain corresponds to 226–275 (KIWQNLRLKTAAAAAAEAPEGAAAGDGGRMALARVSSVKLISKAKIRTVK). A helical membrane pass occupies residues 276-294 (MTFIIVLAFIVCWTPFFFV). Residues 295-309 (QMWSVWDANAPKEAS) lie on the Extracellular side of the membrane. Residues 310-332 (AFIIVMLLASLNSCCNPWIYMLF) traverse the membrane as a helical segment. The Cytoplasmic segment spans residues 333–389 (TGHLFHELVQRFLCCSASYLKGNRLGETSTSKKSNSSSFVLSHRSSSQRSCSQPSTA). Positions 358 to 389 (GETSTSKKSNSSSFVLSHRSSSQRSCSQPSTA) are disordered. Residues 360-389 (TSTSKKSNSSSFVLSHRSSSQRSCSQPSTA) are compositionally biased toward low complexity. Phosphoserine occurs at positions 366 and 368.

This sequence belongs to the G-protein coupled receptor 1 family. Vasopressin/oxytocin receptor subfamily.

It is found in the cell membrane. Receptor for oxytocin. The activity of this receptor is mediated by G proteins which activate a phosphatidylinositol-calcium second messenger system. The sequence is that of Oxytocin receptor (OXTR) from Macaca mulatta (Rhesus macaque).